An 808-amino-acid polypeptide reads, in one-letter code: Aminotransferase ALT4 (808 aa).

The protein belongs to the class-II pyridoxal-phosphate-dependent aminotransferase family. BioF subfamily. Requires pyridoxal 5'-phosphate as cofactor.

It participates in mycotoxin biosynthesis. In terms of biological role, aminotransferase; part of the gene cluster that mediates the biosynthesis of the host-selective toxins (HSTs) AAL-toxins, sphinganine-analog mycotoxins responsible for Alternaria stem canker on tomato by the tomato pathotype. The biosynthesis starts with the polyketide synthase ALT1-catalyzed C-16 carbon chain assembly from one starter acetyl-CoA unit with malonyl-CoA extender units. ALT1 also selectively transfers methyl groups at the first and the third cycle of chain elongation for AAL toxin. The C-16 polyketide chain is released from the enzyme by a nucleophilic attack of a carbanion, which is derived from R-carbon of glycin by decarboxylation, on the carbonyl carbon of polyketide acyl chain. This step is probably catalyzed by a pyridoxal 5'-phosphate-dependent aminoacyl transferase ALT4. The respective functions of the other enzymes encoded by the cluster have still to be elucidated. The sphingosine N-acyltransferase-like protein ALT7 seems not to act as a resistance/self-tolerance factor against the toxin in the toxin biosynthetic gene cluster, contrary to what is expected. The sequence is that of Aminotransferase ALT4 from Alternaria alternata (Alternaria rot fungus).